Here is a 1292-residue protein sequence, read N- to C-terminus: SH3 and multiple ankyrin repeat domains protein 2 (1292 aa).

The PDZ domain occupies 56–150 (TVVLQKKDNE…HLVLKVVTVT (95 aa)). Disordered stretches follow at residues 155 to 176 (PDDT…TALS), 331 to 393 (MPDA…SDNV), 488 to 508 (IKEP…METD), 604 to 656 (SSNA…KLLD), 671 to 743 (ALKE…EKKN), 774 to 811 (LTES…SECG), and 938 to 968 (IEEV…TLSS). The span at 338 to 354 (IPPPPATLPPSPPPPSP) shows a compositional bias: pro residues. Positions 355–365 (SSFNSPKSPAP) are enriched in low complexity. Residues 375–384 (FTQNSGTKSP) are compositionally biased toward polar residues. A compositionally biased stretch (low complexity) spans 492-504 (STSSSGKSSQGSS). Residues 604-623 (SSNAFTNNDSSHQGDVSNAR) show a composition bias toward polar residues. The span at 719-743 (KRQETESKHEPDSSKEEKRQGEKKN) shows a compositional bias: basic and acidic residues. Positions 941 to 952 (VDSRSGSDHHLE) are enriched in basic and acidic residues. Positions 953–968 (TTSTISTVSSISTLSS) are enriched in low complexity. Positions 991–997 (PPVPPKP) match the SH3-binding motif. The interval 1087 to 1115 (TKTGEGLDSPTGMKTASLSTRGTDALSTV) is disordered. The segment covering 1098–1115 (GMKTASLSTRGTDALSTV) has biased composition (polar residues). The 64-residue stretch at 1229–1292 (WTKQDVAEWL…ERALKQLLDR (64 aa)) folds into the SAM domain.

This sequence belongs to the SHANK family.

The protein resides in the cytoplasm. The protein localises to the synapse. It localises to the postsynaptic density. Seems to be an adapter protein in the postsynaptic density (PSD) of excitatory synapses that interconnects receptors of the postsynaptic membrane including NMDA-type and metabotropic glutamate receptors, and the actin-based cytoskeleton. May play a role in the structural and functional organization of the dendritic spine and synaptic junction. In Xenopus laevis (African clawed frog), this protein is SH3 and multiple ankyrin repeat domains protein 2 (shank2).